The following is a 402-amino-acid chain: Deoxyguanosinetriphosphate triphosphohydrolase-like protein (402 aa).

Residues 20–39 (PAFSRGRLVPEPESPTRTPF) are disordered. An HD domain is found at 73–217 (RLTHTIEVAQ…AAIADDIAYN (145 aa)).

The protein belongs to the dGTPase family. Type 2 subfamily.

This is Deoxyguanosinetriphosphate triphosphohydrolase-like protein from Brucella ovis (strain ATCC 25840 / 63/290 / NCTC 10512).